A 188-amino-acid polypeptide reads, in one-letter code: Elongation factor P (188 aa).

The protein belongs to the elongation factor P family.

The protein localises to the cytoplasm. It functions in the pathway protein biosynthesis; polypeptide chain elongation. Functionally, involved in peptide bond synthesis. Stimulates efficient translation and peptide-bond synthesis on native or reconstituted 70S ribosomes in vitro. Probably functions indirectly by altering the affinity of the ribosome for aminoacyl-tRNA, thus increasing their reactivity as acceptors for peptidyl transferase. The sequence is that of Elongation factor P (efp) from Ureaplasma parvum serovar 3 (strain ATCC 700970).